A 177-amino-acid chain; its full sequence is CDP-archaeol synthase (177 aa).

5 helical membrane-spanning segments follow: residues 6–26 (LFASLWYILPAYVANASACIF), 54–74 (CIFGILCGTLVGLIQGILVDF), 90–110 (VILAFFLSVGAIVGDAVGSFI), 124–144 (LLDQLDFVIGALAFGYIVAPI), and 148–168 (MIIIICLFTVFVHLLGNIIAY).

Belongs to the CDP-archaeol synthase family. The cofactor is Mg(2+).

The protein localises to the cell membrane. The catalysed reaction is 2,3-bis-O-(geranylgeranyl)-sn-glycerol 1-phosphate + CTP + H(+) = CDP-2,3-bis-O-(geranylgeranyl)-sn-glycerol + diphosphate. It functions in the pathway membrane lipid metabolism; glycerophospholipid metabolism. Catalyzes the formation of CDP-2,3-bis-(O-geranylgeranyl)-sn-glycerol (CDP-archaeol) from 2,3-bis-(O-geranylgeranyl)-sn-glycerol 1-phosphate (DGGGP) and CTP. This reaction is the third ether-bond-formation step in the biosynthesis of archaeal membrane lipids. This is CDP-archaeol synthase from Methanocaldococcus jannaschii (strain ATCC 43067 / DSM 2661 / JAL-1 / JCM 10045 / NBRC 100440) (Methanococcus jannaschii).